A 118-amino-acid chain; its full sequence is UPF0102 protein Arth_2474 (118 aa).

The protein belongs to the UPF0102 family.

The protein is UPF0102 protein Arth_2474 of Arthrobacter sp. (strain FB24).